The following is a 637-amino-acid chain: Coiled-coil domain-containing protein 22 homolog (637 aa).

2 coiled-coil regions span residues 322–489 (ETEI…YKQA) and 608–637 (SDRV…ETKN).

This sequence belongs to the CCDC22 family.

This Dictyostelium discoideum (Social amoeba) protein is Coiled-coil domain-containing protein 22 homolog.